Consider the following 1034-residue polypeptide: Integrin alpha-V (1034 aa).

Residues 1-19 (MAALRASLLLSCALTAARA) form the signal peptide. At 20–978 (FNLDAERPAV…WGIQPQPMPV (959 aa)) the chain is on the extracellular side. 7 FG-GAP repeats span residues 21 to 86 (NLDA…RNCQ), 97 to 158 (DFAP…VEYA), 161 to 213 (RSTT…LAKY), 225 to 279 (QLAT…GKNM), 280 to 345 (SSMY…GGFQ), 346 to 403 (IAKL…GLNA), and 407 to 470 (RILE…VNPT). Asn62 carries N-linked (GlcNAc...) asparagine glycosylation. 3 cysteine pairs are disulfide-bonded: Cys77–Cys85, Cys126–Cys146, and Cys160–Cys173. 4 residues coordinate Ca(2+): Asp248, Asp252, Ile254, and Asp256. Asn278 and Asn284 each carry an N-linked (GlcNAc...) asparagine glycan. Residues Asp302, Asn304, Asp306, Tyr308, Asp310, Asp367, Asp369, Asp371, Phe373, Asp375, Asp431, Asp433, Asn435, Tyr437, and Asp439 each coordinate Ca(2+). Intrachain disulfides connect Cys479–Cys488 and Cys494–Cys551. N-linked (GlcNAc...) asparagine glycosylation is found at Asn540 and Asn601. Intrachain disulfides connect Cys612-Cys618 and Cys684-Cys697. N-linked (GlcNAc...) asparagine glycosylation is found at Asn690, Asn821, Asn837, and Asn860. 2 cysteine pairs are disulfide-bonded: Cys838/Cys900 and Cys890/Cys895. Residues Asn931, Asn951, Asn959, and Asn966 are each glycosylated (N-linked (GlcNAc...) asparagine). Residues 979–1002 (PVWVIILAVLAGLLLLAVLVLVMY) form a helical membrane-spanning segment. Residues 1003–1034 (RMGFFKRVRPPQEEQEREQLQPHENGEGTSEA) lie on the Cytoplasmic side of the membrane. A GFFKR motif motif is present at residues 1005-1009 (GFFKR). Over residues 1013 to 1028 (PQEEQEREQLQPHENG) the composition is skewed to basic and acidic residues. The segment at 1013–1034 (PQEEQEREQLQPHENGEGTSEA) is disordered.

The protein belongs to the integrin alpha chain family. As to quaternary structure, heterodimer of an alpha and a beta subunit. The alpha subunit is composed of a heavy and a light chain linked by a disulfide bond. Alpha-V (ITGAV) associates with either beta-1 (ITGB1), beta-3 (ITGB3), beta-5 (ITGB5), beta-6 (ITGB6) or beta-8 (ITGB8). Interacts with RAB25. Interacts with CIB1. Integrins ITGAV:ITGB3 and ITGAV:ITGB5 interact with FBLN5 (via N-terminus). ITGAV:ITGB3 and ITGAV:ITGB5 interact with CCN3. ITGAV:ITGB3 interacts with ADGRA2. ITGAV:ITGB3 interacts with FGF2; it is likely that FGF2 can simultaneously bind ITGAV:ITGB3 and FGF receptors. ITGAV:ITGB3 is found in a ternary complex with CX3CR1 and CX3CL1. ITGAV:ITGB3 is found in a ternary complex with NRG1 and ERBB3. ITGAV:ITGB3 is found in a ternary complex with FGF1 and FGFR1. ITGAV:ITGB3 is found in a ternary complex with IGF1 and IGF1R. ITGAV:ITGB3 interacts with IGF2. ITGAV:ITGB3 and ITGAV:ITGB6 interact with FBN1. ITGAV:ITGB3 interacts with CD9, CD81 and CD151 (via second extracellular domain). ITGAV:ITGB6 interacts with TGFB1.

It is found in the membrane. It localises to the cell junction. The protein localises to the focal adhesion. In terms of biological role, the alpha-V (ITGAV) integrins are receptors for vitronectin, cytotactin, fibronectin, fibrinogen, laminin, matrix metalloproteinase-2, osteopontin, osteomodulin, prothrombin, thrombospondin, TGFB1 and vWF. They recognize the sequence R-G-D in a wide array of ligands. Alpha-V integrins may play a role in embryo implantation, angiogenesis and wound healing. ITGAV:ITGB3 binds to fractalkine (CX3CL1) and may act as its coreceptor in CX3CR1-dependent fractalkine signaling. ITGAV:ITGB3 binds to NRG1 (via EGF domain) and this binding is essential for NRG1-ERBB signaling. ITGAV:ITGB3 binds to FGF1 and this binding is essential for FGF1 signaling. ITGAV:ITGB3 binds to FGF2 and this binding is essential for FGF2 signaling. ITGAV:ITGB3 binds to IGF1 and this binding is essential for IGF1 signaling. ITGAV:ITGB3 binds to IGF2 and this binding is essential for IGF2 signaling. ITGAV:ITGB3 binds to IL1B and this binding is essential for IL1B signaling. ITGAV:ITGB3 binds to PLA2G2A via a site (site 2) which is distinct from the classical ligand-binding site (site 1) and this induces integrin conformational changes and enhanced ligand binding to site 1. ITGAV:ITGB3 and ITGAV:ITGB6 act as receptors for fibrillin-1 (FBN1) and mediate R-G-D-dependent cell adhesion to FBN1. Integrin alpha-V/beta-6 or alpha-V/beta-8 (ITGAV:ITGB6 or ITGAV:ITGB8) mediates R-G-D-dependent release of transforming growth factor beta-1 (TGF-beta-1) from regulatory Latency-associated peptide (LAP), thereby playing a key role in TGF-beta-1 activation. ITGAV:ITGB3 acts as a receptor for CD40LG. ITGAV:ITGB3 acts as a receptor for IBSP and promotes cell adhesion and migration to IBSP. The polypeptide is Integrin alpha-V (ITGAV) (Gallus gallus (Chicken)).